Consider the following 21-residue polypeptide: Dahlein-5.5 (21 aa).

Expressed by the skin dorsal glands.

It is found in the secreted. Has no antimicrobial activity. Strongly inhibits the formation of NO by neuronal nitric oxide synthase at micromolar concentrations. The protein is Dahlein-5.5 of Ranoidea dahlii (Dahl's aquatic frog).